Reading from the N-terminus, the 259-residue chain is Ubiquitin-conjugating enzyme E2 J2 (259 aa).

Residues Met-1–His-226 are Cytoplasmic-facing. Residues Thr-12–Glu-162 enclose the UBC core domain. The Glycyl thioester intermediate role is filled by Cys-94. Residues Gln-174 to His-200 form a disordered region. The chain crosses the membrane as a helical; Anchor for type IV membrane protein span at residues Gly-227–Tyr-247. The Lumenal portion of the chain corresponds to Thr-248–Glu-259.

The protein belongs to the ubiquitin-conjugating enzyme family.

The protein localises to the endoplasmic reticulum membrane. It carries out the reaction S-ubiquitinyl-[E1 ubiquitin-activating enzyme]-L-cysteine + [E2 ubiquitin-conjugating enzyme]-L-cysteine = [E1 ubiquitin-activating enzyme]-L-cysteine + S-ubiquitinyl-[E2 ubiquitin-conjugating enzyme]-L-cysteine.. It participates in protein modification; protein ubiquitination. In terms of biological role, catalyzes the covalent attachment of ubiquitin to other proteins. Seems to function in the selective degradation of misfolded membrane proteins from the endoplasmic reticulum (ERAD). In cooperation with the GATOR2 complex, catalyzes 'Lys-6'-linked ubiquitination of NPRL2. In Bos taurus (Bovine), this protein is Ubiquitin-conjugating enzyme E2 J2 (UBE2J2).